We begin with the raw amino-acid sequence, 301 residues long: N-acetylmuramic acid 6-phosphate etherase (301 aa).

Positions isoleucine 57–lysine 220 constitute an SIS domain. The active-site Proton donor is glutamate 85. Residue glutamate 116 is part of the active site.

Belongs to the GCKR-like family. MurNAc-6-P etherase subfamily. In terms of assembly, homodimer.

The catalysed reaction is N-acetyl-D-muramate 6-phosphate + H2O = N-acetyl-D-glucosamine 6-phosphate + (R)-lactate. It participates in amino-sugar metabolism; 1,6-anhydro-N-acetylmuramate degradation. It functions in the pathway amino-sugar metabolism; N-acetylmuramate degradation. Its pathway is cell wall biogenesis; peptidoglycan recycling. In terms of biological role, specifically catalyzes the cleavage of the D-lactyl ether substituent of MurNAc 6-phosphate, producing GlcNAc 6-phosphate and D-lactate. Together with AnmK, is also required for the utilization of anhydro-N-acetylmuramic acid (anhMurNAc) either imported from the medium or derived from its own cell wall murein, and thus plays a role in cell wall recycling. The protein is N-acetylmuramic acid 6-phosphate etherase of Photobacterium profundum (strain SS9).